A 286-amino-acid chain; its full sequence is tRNA (guanine-N(7)-)-methyltransferase (286 aa).

Serine 7 and serine 59 each carry phosphoserine. S-adenosyl-L-methionine is bound by residues glycine 103, glutamate 126–isoleucine 127, asparagine 161–alanine 162, and cysteine 181. Aspartate 184 is an active-site residue. Threonine 259 to glutamate 261 contacts S-adenosyl-L-methionine.

The protein belongs to the class I-like SAM-binding methyltransferase superfamily. TrmB family. In terms of assembly, forms a complex with TRM82.

The protein resides in the nucleus. It carries out the reaction guanosine(46) in tRNA + S-adenosyl-L-methionine = N(7)-methylguanosine(46) in tRNA + S-adenosyl-L-homocysteine. It participates in tRNA modification; N(7)-methylguanine-tRNA biosynthesis. Its function is as follows. Methyltransferase that catalyzes the formation of N(7)-methylguanine at position 46 (m7G46) in tRNA, a modification required to maintain stability of tRNAs; its absence resulting in tRNA decay. Both the D-stem and T-stem structures of tRNAs are required for efficient methyltransferase activity. This is tRNA (guanine-N(7)-)-methyltransferase from Saccharomyces cerevisiae (strain YJM789) (Baker's yeast).